We begin with the raw amino-acid sequence, 61 residues long: Large ribosomal subunit protein uL30 (61 aa).

Belongs to the universal ribosomal protein uL30 family. Part of the 50S ribosomal subunit.

The chain is Large ribosomal subunit protein uL30 from Caulobacter vibrioides (strain ATCC 19089 / CIP 103742 / CB 15) (Caulobacter crescentus).